A 638-amino-acid polypeptide reads, in one-letter code: Plasma kallikrein (638 aa).

Residues Met-1–Cys-19 form the signal peptide. Apple domains are found at residues Cys-21–Cys-104, Cys-111–Cys-194, Cys-201–Cys-284, and Cys-292–Cys-375. Disulfide bonds link Cys-21-Cys-104, Cys-47-Cys-77, Cys-51-Cys-57, Cys-111-Cys-194, Cys-137-Cys-166, Cys-141-Cys-147, Cys-201-Cys-284, Cys-227-Cys-256, Cys-231-Cys-237, Cys-292-Cys-375, Cys-318-Cys-347, Cys-322-Cys-328, Cys-340-Cys-345, Cys-383-Cys-503, Cys-419-Cys-435, Cys-517-Cys-584, Cys-548-Cys-563, and Cys-574-Cys-602. The N-linked (GlcNAc...) asparagine glycan is linked to Asn-127. Asn-215 carries an N-linked (GlcNAc...) asparagine glycan. Residue Asn-308 is glycosylated (N-linked (GlcNAc...) asparagine). In terms of domain architecture, Peptidase S1 spans Ile-391–Gln-626. Asn-396 carries an N-linked (GlcNAc...) asparagine glycan. Residues His-434 and Asp-483 each act as charge relay system in the active site. A glycan (N-linked (GlcNAc...) asparagine) is linked at Asn-494. Ser-578 acts as the Charge relay system in catalysis.

The protein belongs to the peptidase S1 family. Plasma kallikrein subfamily. Forms a heterodimer with SERPINA5. The zymogen is activated by factor XIIa, which cleaves the molecule into a light chain, which contains the active site, and a heavy chain, which associates with HMW kininogen. These chains are linked by one or more disulfide bonds.

It localises to the secreted. It catalyses the reaction Cleaves selectively Arg-|-Xaa and Lys-|-Xaa bonds, including Lys-|-Arg and Arg-|-Ser bonds in (human) kininogen to release bradykinin.. Its activity is regulated as follows. Inhibited by SERPINA5. Functionally, the enzyme cleaves Lys-Arg and Arg-Ser bonds. It activates, in a reciprocal reaction, factor XII after its binding to a negatively charged surface. It also releases bradykinin from HMW kininogen and may also play a role in the renin-angiotensin system by converting prorenin into renin. In Mus musculus (Mouse), this protein is Plasma kallikrein (Klkb1).